The following is a 575-amino-acid chain: Melatonin-related receptor (575 aa).

Residues 1 to 30 (MGRTLAVPTPYGCIGCKLPQPDYPPALIVF) lie on the Extracellular side of the membrane. The chain crosses the membrane as a helical span at residues 31-51 (MFCAMVITIVVDLIGNSMVIL). The Cytoplasmic portion of the chain corresponds to 52–64 (AVSKNKKLRNSGN). Residues 65 to 85 (VFVVSLSVADMLVAIYPYPLM) form a helical membrane-spanning segment. Residues 86 to 103 (LHAMAIGGWDLSKLQCQM) lie on the Extracellular side of the membrane. An intrachain disulfide couples cysteine 101 to cysteine 178. A helical membrane pass occupies residues 104–124 (VGFITGLSVVGSIFNIMAIAI). The Cytoplasmic segment spans residues 125–143 (NRYCYICHSLQYERIFSVR). A helical transmembrane segment spans residues 144-164 (NTCIYLAVTWIMTVLAVLPNM). Topologically, residues 165–188 (YIGTIEYDPRTYTCIFNYVNNPAF) are extracellular. The chain crosses the membrane as a helical span at residues 189 to 209 (AVTIVCIHFVLPLLIVGFCYV). Over 210–239 (KIWTKVLAARDPAGQNPDNQLAEVRNFLTM) the chain is Cytoplasmic. Residues 240–260 (FVIFLLFAVCWCPINALTVLV) form a helical membrane-spanning segment. The Extracellular segment spans residues 261–273 (AVNPKEMAGKIPN). The chain crosses the membrane as a helical span at residues 274–294 (WVYLAAYFIAYFNSCLNAVIY). At 295–575 (GVLNENFRRE…VDADSDEMAV (281 aa)) the chain is on the cytoplasmic side. Disordered stretches follow at residues 368 to 421 (VPLP…TVYP) and 446 to 474 (SSHP…TGYT). Polar residues predominate over residues 455–474 (PSKTAISPATSFPKPTTGYT).

This sequence belongs to the G-protein coupled receptor 1 family. As to quaternary structure, homodimer, and heterodimer with MTNR1A and MTNR1B. Interacts with KAT5. Interacts with RTN4 isoform A/NOGO-A. Interacts with TGFBR1.

It is found in the cell membrane. Its function is as follows. G protein-coupled receptor that plays a role in numerous physiological processes including regulation of energy metabolism, neurite outgrowth or cell migration. Promotes self-renewal and neuronal differentiation of neural progenitor cells through activation of the NOTCH and WNT/beta-catenin signaling pathways. Modulates the KAT5-dependent glucocorticoid receptor signaling by modulating KAT5 subcellular compartmentalisation. Also plays a role in the activation TGFBR1 in the absence of TGFBR2 by interfering with FKBP1A binding to TGFBR1, leading to induction of both canonical and non-canonical SMAD signaling pathways resulting in inhibition of proliferation or promotion of migration. The protein is Melatonin-related receptor (GPR50) of Ovis aries (Sheep).